An 882-amino-acid chain; its full sequence is DNA replication helicase (882 aa).

Positions 1-29 are disordered; that stretch reads MAAAGGERQLDGQKPGPPHLQQPGDRPAV. Position 97 to 104 (97 to 104) interacts with ATP; the sequence is GNAGSGKS.

It belongs to the herpesviridae helicase family. Associates with the primase and the primase-associated factor to form the helicase-primase complex.

It localises to the host nucleus. Functionally, component of the helicase/primase complex. Unwinds the DNA at the replication forks and generates single-stranded DNA for both leading and lagging strand synthesis. The primase synthesizes short RNA primers on the lagging strand that the polymerase elongates using dNTPs. Possesses helicase-like motifs and therefore may act as the helicase subunit of the complex. The protein is DNA replication helicase of Homo sapiens (Human).